The following is a 346-amino-acid chain: Ferredoxin--NADP reductase 1 (346 aa).

The FAD site is built by glutamate 37, lysine 45, tyrosine 49, isoleucine 89, proline 124, aspartate 287, and serine 328.

It belongs to the ferredoxin--NADP reductase type 2 family. As to quaternary structure, homodimer. FAD serves as cofactor.

The catalysed reaction is 2 reduced [2Fe-2S]-[ferredoxin] + NADP(+) + H(+) = 2 oxidized [2Fe-2S]-[ferredoxin] + NADPH. The chain is Ferredoxin--NADP reductase 1 from Bacillus pumilus (strain SAFR-032).